Consider the following 145-residue polypeptide: D-aminoacyl-tRNA deacylase (145 aa).

Positions 137-138 (GP) match the Gly-cisPro motif, important for rejection of L-amino acids motif.

This sequence belongs to the DTD family. In terms of assembly, homodimer.

It is found in the cytoplasm. It carries out the reaction glycyl-tRNA(Ala) + H2O = tRNA(Ala) + glycine + H(+). It catalyses the reaction a D-aminoacyl-tRNA + H2O = a tRNA + a D-alpha-amino acid + H(+). In terms of biological role, an aminoacyl-tRNA editing enzyme that deacylates mischarged D-aminoacyl-tRNAs. Also deacylates mischarged glycyl-tRNA(Ala), protecting cells against glycine mischarging by AlaRS. Acts via tRNA-based rather than protein-based catalysis; rejects L-amino acids rather than detecting D-amino acids in the active site. By recycling D-aminoacyl-tRNA to D-amino acids and free tRNA molecules, this enzyme counteracts the toxicity associated with the formation of D-aminoacyl-tRNA entities in vivo and helps enforce protein L-homochirality. This is D-aminoacyl-tRNA deacylase from Salmonella enteritidis PT4 (strain P125109).